The chain runs to 405 residues: Phosphopentomutase (405 aa).

Residues Asp10, Asp303, His308, Asp344, His345, and His356 each coordinate Mn(2+).

The protein belongs to the phosphopentomutase family. Mn(2+) serves as cofactor.

Its subcellular location is the cytoplasm. The enzyme catalyses 2-deoxy-alpha-D-ribose 1-phosphate = 2-deoxy-D-ribose 5-phosphate. The catalysed reaction is alpha-D-ribose 1-phosphate = D-ribose 5-phosphate. The protein operates within carbohydrate degradation; 2-deoxy-D-ribose 1-phosphate degradation; D-glyceraldehyde 3-phosphate and acetaldehyde from 2-deoxy-alpha-D-ribose 1-phosphate: step 1/2. Isomerase that catalyzes the conversion of deoxy-ribose 1-phosphate (dRib-1-P) and ribose 1-phosphate (Rib-1-P) to deoxy-ribose 5-phosphate (dRib-5-P) and ribose 5-phosphate (Rib-5-P), respectively. The chain is Phosphopentomutase from Shewanella loihica (strain ATCC BAA-1088 / PV-4).